A 367-amino-acid polypeptide reads, in one-letter code: 2-aminoethylphosphonate--pyruvate transaminase (367 aa).

Pyridoxal 5'-phosphate-binding positions include 65–67, Tyr92, Thr143, and Asp168; that span reads SGS. An N6-(pyridoxal phosphate)lysine modification is found at Lys194. Thr243 lines the pyridoxal 5'-phosphate pocket.

It belongs to the class-V pyridoxal-phosphate-dependent aminotransferase family. PhnW subfamily. Homodimer. Requires pyridoxal 5'-phosphate as cofactor.

It carries out the reaction (2-aminoethyl)phosphonate + pyruvate = phosphonoacetaldehyde + L-alanine. Its function is as follows. Involved in phosphonate degradation. This chain is 2-aminoethylphosphonate--pyruvate transaminase (phnW), found in Salmonella typhimurium (strain LT2 / SGSC1412 / ATCC 700720).